Here is a 478-residue protein sequence, read N- to C-terminus: Calcium/calmodulin-dependent protein kinase type II subunit alpha (478 aa).

Y13 carries the post-translational modification Phosphotyrosine. The 259-residue stretch at 13-271 (YQLFEELGKG…AAEALKHPWI (259 aa)) folds into the Protein kinase domain. ATP is bound by residues 19–27 (LGKGAFSVV) and K42. D135 serves as the catalytic Proton acceptor. The residue at position 257 (S257) is a Phosphoserine. T286 is subject to Phosphothreonine; by autocatalysis. The tract at residues 290 to 300 (LKKFNARRKLK) is calmodulin-binding. Positions 310 to 320 (TRNFSGGKSGG) are interaction with BAALC. Residues 314-341 (SGGKSGGNKKSDGVKESSESTNTTIEDE) form a disordered region. Residues 322 to 331 (KKSDGVKESS) show a composition bias toward basic and acidic residues. Phosphoserine occurs at positions 330, 331, and 333. 2 positions are modified to phosphothreonine: T336 and T337. Position 404 is a phosphoserine (S404).

This sequence belongs to the protein kinase superfamily. CAMK Ser/Thr protein kinase family. CaMK subfamily. In terms of assembly, there are 4 genes encoding calcium/calmodulin-dependent protein kinase type II chains: CAMK2A, CAMK2B, CAMK2G and CAMK2D. The corresponding proteins assemble into homo- or heteromultimeric holoenzymes composed of 12 subunits with two hexameric rings stacked one on top of the other. Interacts with BAALC. Interacts with MPDZ. Interacts with SYN1. Interacts with CAMK2N2. Interacts with SYNGAP1. Interacts with SYNPO2. Interacts with SHANK3. Interacts with GRIN2B. Interacts with CACNB2. Interacts with LRRC7. Interacts with GRM5. Interacts with DAGLA (via C-terminal); this interaction is enhanced by autophosphorylation of CAMK2A at Thr-286. Interacts with CAMK2N1; this interaction requires CAMK2A activation by Ca(2+). Mg(2+) is required as a cofactor. Post-translationally, autophosphorylation of Thr-286 following activation by Ca(2+)/calmodulin. Phosphorylation of Thr-286 locks the kinase into an activated state. Palmitoylated. Probably palmitoylated by ZDHHC3 and ZDHHC7.

The protein localises to the synapse. Its subcellular location is the postsynaptic density. The protein resides in the cell projection. It is found in the dendritic spine. It localises to the dendrite. It carries out the reaction L-seryl-[protein] + ATP = O-phospho-L-seryl-[protein] + ADP + H(+). The enzyme catalyses L-threonyl-[protein] + ATP = O-phospho-L-threonyl-[protein] + ADP + H(+). Activated by Ca(2+)/calmodulin. Binding of calmodulin results in conformational change that relieves intrasteric autoinhibition and allows autophosphorylation of Thr-286 which turns the kinase in a constitutively active form and confers to the kinase a Ca(2+)-independent activity. Functionally, calcium/calmodulin-dependent protein kinase that functions autonomously after Ca(2+)/calmodulin-binding and autophosphorylation, and is involved in various processes, such as synaptic plasticity, neurotransmitter release and long-term potentiation. Member of the NMDAR signaling complex in excitatory synapses, it regulates NMDAR-dependent potentiation of the AMPAR and therefore excitatory synaptic transmission. Regulates dendritic spine development. Also regulates the migration of developing neurons. Phosphorylates the transcription factor FOXO3 to activate its transcriptional activity. Phosphorylates the transcription factor ETS1 in response to calcium signaling, thereby decreasing ETS1 affinity for DNA. In response to interferon-gamma (IFN-gamma) stimulation, catalyzes phosphorylation of STAT1, stimulating the JAK-STAT signaling pathway. In response to interferon-beta (IFN-beta) stimulation, stimulates the JAK-STAT signaling pathway. Acts as a negative regulator of 2-arachidonoylglycerol (2-AG)-mediated synaptic signaling via modulation of DAGLA activity. The sequence is that of Calcium/calmodulin-dependent protein kinase type II subunit alpha (CAMK2A) from Pongo abelii (Sumatran orangutan).